Here is a 986-residue protein sequence, read N- to C-terminus: Ephrin type-A receptor 4-A (986 aa).

A signal peptide spans 1–20; the sequence is MAGIVHGILFCGLFGLCWAV. Over 21–547 the chain is Extracellular; the sequence is TGSRIYPASE…MIGEGASPTV (527 aa). Residues 30 to 209 form the Eph LBD domain; that stretch reads EVTLLDSRSV…FYKKCPLTVR (180 aa). Fibronectin type-III domains are found at residues 328–438 and 439–536; these read PPSA…TNQA and APST…TVPS. Asparagine 340 and asparagine 407 each carry an N-linked (GlcNAc...) asparagine glycan. Residues 548–569 form a helical membrane-spanning segment; the sequence is LLVSVAGSIVLVVILIAAFVIS. The Cytoplasmic portion of the chain corresponds to 570-986; that stretch reads RRRSKYSKAK…QQIQGRMVPV (417 aa). 2 positions are modified to phosphotyrosine; by autocatalysis: tyrosine 595 and tyrosine 601. The 262-residue stretch at 620 to 881 folds into the Protein kinase domain; that stretch reads IKIEKVIGVG…QIVSMLDKLI (262 aa). ATP-binding positions include 626–634 and lysine 652; that span reads IGVGEFGEV. The active-site Proton acceptor is the aspartate 745. Tyrosine 778 and tyrosine 928 each carry phosphotyrosine; by autocatalysis. Residues 911–975 form the SAM domain; the sequence is SQVASVLDWL…LSSVQGMRTQ (65 aa). Residues 984–986 carry the PDZ-binding motif; the sequence is VPV.

This sequence belongs to the protein kinase superfamily. Tyr protein kinase family. Ephrin receptor subfamily.

Its subcellular location is the cell membrane. The protein resides in the early endosome. The catalysed reaction is L-tyrosyl-[protein] + ATP = O-phospho-L-tyrosyl-[protein] + ADP + H(+). Functionally, receptor tyrosine kinase which binds membrane-bound ephrin family ligands residing on adjacent cells, leading to contact-dependent bidirectional signaling into neighboring cells. The signaling pathway downstream of the receptor is referred to as forward signaling while the signaling pathway downstream of the ephrin ligand is referred to as reverse signaling. Highly promiscuous, it has the unique property among Eph receptors to bind and to be physiologically activated by both GPI-anchored ephrin-A and transmembrane ephrin-B ligands including EFNA1 and EFNB3. Upon activation by ephrin ligands, modulates cell morphology and integrin-dependent cell adhesion through regulation of the Rac, Rap and Rho GTPases activity. Plays an important role in the development of the nervous system controlling different steps of axonal guidance including the establishment of the corticospinal projections. In Xenopus laevis (African clawed frog), this protein is Ephrin type-A receptor 4-A (epha4-a).